A 609-amino-acid chain; its full sequence is Glutamine--fructose-6-phosphate aminotransferase [isomerizing] (609 aa).

The active-site Nucleophile; for GATase activity is C2. The Glutamine amidotransferase type-2 domain maps to 2-219 (CGIFGYLGSK…SGELAIVGLG (218 aa)). SIS domains are found at residues 280–426 (ISEK…SKHT) and 458–599 (WAHT…IDCP). Catalysis depends on K604, which acts as the For Fru-6P isomerization activity.

As to quaternary structure, homodimer.

Its subcellular location is the cytoplasm. The enzyme catalyses D-fructose 6-phosphate + L-glutamine = D-glucosamine 6-phosphate + L-glutamate. Catalyzes the first step in hexosamine metabolism, converting fructose-6P into glucosamine-6P using glutamine as a nitrogen source. This Chlamydia abortus (strain DSM 27085 / S26/3) (Chlamydophila abortus) protein is Glutamine--fructose-6-phosphate aminotransferase [isomerizing].